Reading from the N-terminus, the 292-residue chain is MVIVTKGAYVHEFPRTAEWNAFAQILSREHGYIVSDTALEGAAKPYYVVNSSGFYGPPGLDGLISTLDRELQYYSKLLYEIKGLGVMSDENVFGTQYDGNLTARVSRLERRLNPMSNIGSSSRPWSEHKSAVKKADLERYVYANFADWSNHLGPAGKSTREVVKYLMYRMGYYSDTSGIGHDLNYKHFRDHLDIYNLTCSPPFLVSSAVVDGHYARDKFVSFQGVCGFNPMFPDVNGLKSSWSLGRQLDDIRSQKKEVSGTNQEPNYYYDGDTLKPIGSGASVVGERRPGWR.

Its function is as follows. May be involved in transmission by vector nematode species. The polypeptide is 32 kDa protein (Bidens pilosa (Hairy beggarticks)).